The chain runs to 35 residues: IDPPRYCNHIICYEDSECSQWCTAGCNSITSKCDT.

4-hydroxyproline is present on residues proline 3 and proline 4. Cystine bridges form between cysteine 7–cysteine 22, cysteine 12–cysteine 26, and cysteine 18–cysteine 33. Residues glutamate 14 and glutamate 17 each carry the 4-carboxyglutamate modification.

Expressed by the venom duct.

The protein localises to the secreted. This is Turripeptide gsp9a from Gemmula speciosa (Splendid gem-turris).